We begin with the raw amino-acid sequence, 120 residues long: MKLTKNESRMRRKIRIRKKVSGNGARPRLVVYRSNLHIYAQLVDDQTGTTLAATSTLALGKQNGNALRLTVDNASLVGKEIAKLAKEKNIERVVFDRNGYIYHGRIKAVADGAREAGLEF.

Belongs to the universal ribosomal protein uL18 family. In terms of assembly, part of the 50S ribosomal subunit; part of the 5S rRNA/L5/L18/L25 subcomplex. Contacts the 5S and 23S rRNAs.

Its function is as follows. This is one of the proteins that bind and probably mediate the attachment of the 5S RNA into the large ribosomal subunit, where it forms part of the central protuberance. This is Large ribosomal subunit protein uL18 from Oleidesulfovibrio alaskensis (strain ATCC BAA-1058 / DSM 17464 / G20) (Desulfovibrio alaskensis).